Reading from the N-terminus, the 373-residue chain is Packaging protein 3 (373 aa).

Residues Met-1–Pro-32 are disordered. Positions Met-1–Ser-150 are interaction with packaging protein 1. A phosphoserine; by host mark is found at Ser-52 and Ser-334.

The protein belongs to the adenoviridae packaging protein 3 family. In terms of assembly, part of the genome packaging complex composed of packaging proteins 1, 2 and 3; this complex specifically binds to the packaging sequence on the left end of viral genomic DNA and performs packaging of the viral genome. Interacts with hexon-linking protein IIIa; this interaction is required to promote correct genome packaging. Post-translationally, cleaved at different sites by the viral protease during virion maturation.

The protein localises to the host nucleus. Functionally, involved in viral genome packaging through its interaction with packaging proteins 1 and 2. After proteolytic cleavage by adenovirus protease, L1 52/55k protein is removed from the capsid during viral maturation. This Homo sapiens (Human) protein is Packaging protein 3.